The sequence spans 404 residues: Cysteine desulfurase IscS (404 aa).

Pyridoxal 5'-phosphate contacts are provided by residues alanine 75–threonine 76, asparagine 155, glutamine 183, and serine 203–histidine 205. Residue lysine 206 is modified to N6-(pyridoxal phosphate)lysine. Residue threonine 243 coordinates pyridoxal 5'-phosphate. The active-site Cysteine persulfide intermediate is the cysteine 328. Cysteine 328 contributes to the [2Fe-2S] cluster binding site.

This sequence belongs to the class-V pyridoxal-phosphate-dependent aminotransferase family. NifS/IscS subfamily. In terms of assembly, homodimer. Forms a heterotetramer with IscU, interacts with other sulfur acceptors. It depends on pyridoxal 5'-phosphate as a cofactor.

The protein localises to the cytoplasm. The catalysed reaction is (sulfur carrier)-H + L-cysteine = (sulfur carrier)-SH + L-alanine. Its pathway is cofactor biosynthesis; iron-sulfur cluster biosynthesis. Functionally, master enzyme that delivers sulfur to a number of partners involved in Fe-S cluster assembly, tRNA modification or cofactor biosynthesis. Catalyzes the removal of elemental sulfur atoms from cysteine to produce alanine. Functions as a sulfur delivery protein for Fe-S cluster synthesis onto IscU, an Fe-S scaffold assembly protein, as well as other S acceptor proteins. In Azotobacter vinelandii (strain DJ / ATCC BAA-1303), this protein is Cysteine desulfurase IscS.